Consider the following 100-residue polypeptide: Large ribosomal subunit protein uL23 (100 aa).

This sequence belongs to the universal ribosomal protein uL23 family. As to quaternary structure, part of the 50S ribosomal subunit. Contacts protein L29, and trigger factor when it is bound to the ribosome.

Functionally, one of the early assembly proteins it binds 23S rRNA. One of the proteins that surrounds the polypeptide exit tunnel on the outside of the ribosome. Forms the main docking site for trigger factor binding to the ribosome. In Aliivibrio fischeri (strain MJ11) (Vibrio fischeri), this protein is Large ribosomal subunit protein uL23.